The chain runs to 534 residues: Cytokinin dehydrogenase 5 (534 aa).

An N-terminal signal peptide occupies residues 1 to 20; it reads MAWCLVFMVFLIYCLISTVG. In terms of domain architecture, FAD-binding PCMH-type spans 59-243; sequence TSAEPLAVFH…TRARIALEPA (185 aa). Residues alanine 93, glycine 95, and glycine 97 each coordinate FAD. The residue at position 98 (histidine 98) is a Pros-8alpha-FAD histidine. 2 residues coordinate FAD: serine 99 and glutamine 103. A glycan (N-linked (GlcNAc...) asparagine) is linked at asparagine 152. FAD is bound by residues aspartate 167, serine 172, serine 178, isoleucine 182, and isoleucine 233. An N-linked (GlcNAc...) asparagine glycan is attached at asparagine 256. 2 residues coordinate FAD: tyrosine 484 and glutamine 522.

Belongs to the oxygen-dependent FAD-linked oxidoreductase family. Monomer. FAD serves as cofactor. In terms of tissue distribution, expressed in inflorescence meristems.

The protein localises to the secreted. The protein resides in the extracellular space. The catalysed reaction is N(6)-dimethylallyladenine + A + H2O = 3-methyl-2-butenal + adenine + AH2. Its function is as follows. Catalyzes the oxidation of cytokinins, a family of N(6)-substituted adenine derivatives that are plant hormones, where the substituent is an isopentenyl group. In Oryza sativa subsp. japonica (Rice), this protein is Cytokinin dehydrogenase 5 (CKX5).